The primary structure comprises 111 residues: Magnetosome protein MamF (111 aa).

Over 1–17 the chain is Cytoplasmic; it reads MAETILIETKTAGGNCR. Residues 18–38 form a helical membrane-spanning segment; that stretch reads SYLMAGASYLGILCFVPLLMS. Over 39-50 the chain is Lumenal; sequence RDDEYVYFHAKQ. The helical transmembrane segment at 51-71 threads the bilayer; it reads GLVLWMWSILAMFALHLPGIG. A topological domain (cytoplasmic) is located at residue lysine 72. A helical membrane pass occupies residues 73-93; the sequence is WLFGFSSMGVLMLSVVGLVSV. Residues 94–111 lie on the Lumenal side of the membrane; sequence ALRRTWRLPLISHVVALI.

Belongs to the magnetosome MamF/MmsF protein family. In terms of assembly, may form homooligomers. In terms of processing, subject to cleavage or degradation; identified by N-terminal sequencing of proteins that are about 103, 92 and 15 kDa in size.

It is found in the magnetosome membrane. Functionally, plays a role in regulating magnetite crystal size; partially redundant function with MmsF. This is Magnetosome protein MamF from Magnetospirillum gryphiswaldense (strain DSM 6361 / JCM 21280 / NBRC 15271 / MSR-1).